The sequence spans 342 residues: Phosphate acyltransferase (342 aa).

Belongs to the PlsX family. Homodimer. Probably interacts with PlsY.

Its subcellular location is the cytoplasm. It catalyses the reaction a fatty acyl-[ACP] + phosphate = an acyl phosphate + holo-[ACP]. It functions in the pathway lipid metabolism; phospholipid metabolism. Its function is as follows. Catalyzes the reversible formation of acyl-phosphate (acyl-PO(4)) from acyl-[acyl-carrier-protein] (acyl-ACP). This enzyme utilizes acyl-ACP as fatty acyl donor, but not acyl-CoA. The protein is Phosphate acyltransferase of Leuconostoc mesenteroides subsp. mesenteroides (strain ATCC 8293 / DSM 20343 / BCRC 11652 / CCM 1803 / JCM 6124 / NCDO 523 / NBRC 100496 / NCIMB 8023 / NCTC 12954 / NRRL B-1118 / 37Y).